Here is a 214-residue protein sequence, read N- to C-terminus: Thymidylate kinase (214 aa).

10–17 (GGEGAGKS) serves as a coordination point for ATP.

The protein belongs to the thymidylate kinase family.

It carries out the reaction dTMP + ATP = dTDP + ADP. Its function is as follows. Phosphorylation of dTMP to form dTDP in both de novo and salvage pathways of dTTP synthesis. This Brucella canis (strain ATCC 23365 / NCTC 10854 / RM-666) protein is Thymidylate kinase.